The sequence spans 194 residues: NADH-quinone oxidoreductase subunit B (194 aa).

The disordered stretch occupies residues 1-26 (MGLTPSATKPEIAQAPQGIVDPSTGR). Cys73, Cys74, Cys138, and Cys168 together coordinate [4Fe-4S] cluster.

The protein belongs to the complex I 20 kDa subunit family. As to quaternary structure, NDH-1 is composed of 14 different subunits. Subunits NuoB, C, D, E, F, and G constitute the peripheral sector of the complex. The cofactor is [4Fe-4S] cluster.

The protein resides in the cell inner membrane. It carries out the reaction a quinone + NADH + 5 H(+)(in) = a quinol + NAD(+) + 4 H(+)(out). Its function is as follows. NDH-1 shuttles electrons from NADH, via FMN and iron-sulfur (Fe-S) centers, to quinones in the respiratory chain. The immediate electron acceptor for the enzyme in this species is believed to be ubiquinone. Couples the redox reaction to proton translocation (for every two electrons transferred, four hydrogen ions are translocated across the cytoplasmic membrane), and thus conserves the redox energy in a proton gradient. The chain is NADH-quinone oxidoreductase subunit B from Xanthobacter autotrophicus (strain ATCC BAA-1158 / Py2).